Here is a 175-residue protein sequence, read N- to C-terminus: Ribosome maturation factor RimM (175 aa).

The PRC barrel domain occupies 96 to 175 (EGDYYWHDLI…TIEVDWDAGF (80 aa)).

It belongs to the RimM family. As to quaternary structure, binds ribosomal protein uS19.

Its subcellular location is the cytoplasm. Its function is as follows. An accessory protein needed during the final step in the assembly of 30S ribosomal subunit, possibly for assembly of the head region. Essential for efficient processing of 16S rRNA. May be needed both before and after RbfA during the maturation of 16S rRNA. It has affinity for free ribosomal 30S subunits but not for 70S ribosomes. The protein is Ribosome maturation factor RimM of Haemophilus influenzae (strain PittEE).